A 368-amino-acid polypeptide reads, in one-letter code: WD repeat-containing protein RUP2 (368 aa).

7 WD repeats span residues serine 38 to alanine 77, cysteine 97 to glutamate 138, glutamate 141 to valine 184, isoleucine 192 to leucine 232, glycine 236 to glutamate 276, valine 279 to valine 318, and serine 330 to proline 368.

In terms of assembly, interacts with UVR8.

It localises to the nucleus. The protein resides in the cytoplasm. Its subcellular location is the cytosol. In terms of biological role, functions in association with RUP1 as repressor of UV-B-induced photomorphogenesis mediated by UVR8 and HY5. Plays a crucial negative feedback regulatory role downstream of UVR8-COP1 to inhibit UVR8 function, balance UV-B-specific responses and ensure normal plant growth. Is involved in the regulation of photoperiodic flowering and vegetative development. May act as negative regulator of photoperiodic flowering by suppressing flowering through the action of CONSTANS (CO) and FLOWERING LOCUS T (FT). The protein is WD repeat-containing protein RUP2 (RUP2) of Arabidopsis thaliana (Mouse-ear cress).